The following is a 494-amino-acid chain: Succinoglycan biosynthesis transport protein ExoT (494 aa).

A run of 13 helical transmembrane segments spans residues 16 to 36 (WSVLSKTGTFGLKFVTVPILA), 44 to 64 (FGAVAVALTVVQFLAMIGGAG), 82 to 102 (SVFWANLAIALMMALGLFVFA), 105 to 125 (LATLLGAPEAAYLLRIMSLLI), 157 to 177 (LGAVIAVLLALLGFGIWSLLA), 215 to 235 (FGMMGSEIANFITFQSPMVVI), 253 to 273 (FASIPNQVVLSAVMGVLFPTF), 297 to 317 (LLAPMMFGLWALAEPAMLVLF), 321 to 341 (WAYAWPVLGLLALSKGILTPC), 343 to 363 (TFIPYLKGVGQGAVLFWWALI), 384 to 404 (AMIWLCIVNAVTLVGYSWVVF), 421 to 441 (PMIAALLMALVVRFLLEHFGA), and 447 to 467 (VLQLIAGTAIGSVIYTVLILL).

Belongs to the polysaccharide synthase family.

The protein localises to the cell membrane. It functions in the pathway glycan metabolism; exopolysaccharide biosynthesis. The polypeptide is Succinoglycan biosynthesis transport protein ExoT (exoT) (Rhizobium meliloti (strain 1021) (Ensifer meliloti)).